Consider the following 62-residue polypeptide: Large ribosomal subunit protein bL33c (62 aa).

Belongs to the bacterial ribosomal protein bL33 family.

Its subcellular location is the plastid. It is found in the chloroplast. This Cyanidioschyzon merolae (strain NIES-3377 / 10D) (Unicellular red alga) protein is Large ribosomal subunit protein bL33c.